The primary structure comprises 397 residues: ATP-dependent RNA helicase eIF4A (397 aa).

Positions 23–51 (YKFDDLNLKPNIVRGIFGYGYETPSAIQQ) match the Q motif motif. The Helicase ATP-binding domain maps to 54 to 224 (ILPITEGRDV…TKFMNNPVRI (171 aa)). 67-74 (AQSGTGKT) provides a ligand contact to ATP. A DEAD box motif is present at residues 172-175 (DEAD). In terms of domain architecture, Helicase C-terminal spans 235 to 396 (GIKQFYINVE…EMPADIGALF (162 aa)).

This sequence belongs to the DEAD box helicase family. eIF4A subfamily. As to quaternary structure, component of the eIF4F complex, which composition varies with external and internal environmental conditions. It is composed of at least eIF4A, eIF4E and eIF4G.

The protein localises to the cytoplasm. It catalyses the reaction ATP + H2O = ADP + phosphate + H(+). Functionally, ATP-dependent RNA helicase which is a subunit of the eIF4F complex involved in cap recognition and is required for mRNA binding to ribosome. In the current model of translation initiation, eIF4A unwinds RNA secondary structures in the 5'-UTR of mRNAs which is necessary to allow efficient binding of the small ribosomal subunit, and subsequent scanning for the initiator codon. This is ATP-dependent RNA helicase eIF4A (TIF1) from Scheffersomyces stipitis (strain ATCC 58785 / CBS 6054 / NBRC 10063 / NRRL Y-11545) (Yeast).